A 184-amino-acid chain; its full sequence is Peptide deformylase 2 (184 aa).

2 residues coordinate Fe cation: cysteine 110 and histidine 153. The active site involves glutamate 154. Histidine 157 serves as a coordination point for Fe cation.

It belongs to the polypeptide deformylase family. The cofactor is Fe(2+).

The catalysed reaction is N-terminal N-formyl-L-methionyl-[peptide] + H2O = N-terminal L-methionyl-[peptide] + formate. In terms of biological role, removes the formyl group from the N-terminal Met of newly synthesized proteins. Requires at least a dipeptide for an efficient rate of reaction. N-terminal L-methionine is a prerequisite for activity but the enzyme has broad specificity at other positions. This Bacillus anthracis protein is Peptide deformylase 2.